Consider the following 168-residue polypeptide: Cyclic pyranopterin monophosphate synthase (168 aa).

Substrate is bound by residues 83 to 85 (LCH) and 121 to 122 (ME). The active site involves aspartate 136.

The protein belongs to the MoaC family. Homohexamer; trimer of dimers.

The enzyme catalyses (8S)-3',8-cyclo-7,8-dihydroguanosine 5'-triphosphate = cyclic pyranopterin phosphate + diphosphate. It functions in the pathway cofactor biosynthesis; molybdopterin biosynthesis. Its function is as follows. Catalyzes the conversion of (8S)-3',8-cyclo-7,8-dihydroguanosine 5'-triphosphate to cyclic pyranopterin monophosphate (cPMP). This chain is Cyclic pyranopterin monophosphate synthase, found in Nostoc sp. (strain PCC 7120 / SAG 25.82 / UTEX 2576).